Here is a 703-residue protein sequence, read N- to C-terminus: MSLLKERKPKKPHYIPRPPGKPFKYKCFQCPFTCNEKSHLFNHMKYGLCKNSITLVSEQDRIPKCPKSSSLDPKQTHQPEPTSKPATSKSLLNGLSSFDPKSQQGSAKEDAKENLEMQARGAHKGPQKPALQKEMAPEAILSTQPCLDSGVRHSAFVPVGEHRLRGPEDTEATEVLANSTTKASSFHAKSAFHTPGYPWKAGSPFLPPDFPHKISSTKGFGAISPYMHPAIPEYPHPFYAEHGLAAIYSPYLLTGNTPECETTLLSVYGTQDQRHFLSPAGPIPKHLNTSPSTYDHYRFFQQYHSNLPIPYGFYRPESAFPSYSLRLPSVTGITRDQSSRLLEDATLAYPASSPSELNLSSSHRKHTECEKGSPVPEAKDPSKDGQRDAEEAKMSPRAGSAATGSPGRPSPTNFTQTSQTFEGLCDLSNKAASSGTLERLQQAEQSPTAFKPVQRGSESPHSQPPANRTESPKSLQAMNGDPPAQTGSSNSFITEAPPSSPEDHSRIGPLNLSKKLETNPAATYGPMYASNAQADTLQDLPLNLSVKDLCNAWAPRPALPGPPQGAEPAATPKTETKGSEDRTSRVETPQDKAHSRTTPDVHTEDSSDEQKQTAAVALCQLAAYSPGNVRVADEEGTVQEPTRQDVPTLSATENLEAQCDLRPKGQKRTSQRDTGKSQQGTKKPKLNDPVPRVLTLRRRTRVS.

A CCHC-type zinc finger spans residues 25 to 51; that stretch reads YKCFQCPFTCNEKSHLFNHMKYGLCKN. Zn(2+)-binding residues include C27, C30, H43, and C49. 4 disordered regions span residues 64–113, 350–527, 553–614, and 630–703; these read KCPK…DAKE, PASS…YGPM, WAPR…KQTA, and RVAD…TRVS. The segment covering 67-106 has biased composition (polar residues); sequence KSSSLDPKQTHQPEPTSKPATSKSLLNGLSSFDPKSQQGS. Residues 352–361 are compositionally biased toward low complexity; it reads SSPSELNLSS. Over residues 367 to 394 the composition is skewed to basic and acidic residues; it reads TECEKGSPVPEAKDPSKDGQRDAEEAKM. 2 stretches are compositionally biased toward polar residues: residues 410-421 and 456-477; these read SPTNFTQTSQTF and GSES…SLQA. Over residues 574 to 611 the composition is skewed to basic and acidic residues; that stretch reads TETKGSEDRTSRVETPQDKAHSRTTPDVHTEDSSDEQK. Over residues 639 to 655 the composition is skewed to polar residues; sequence QEPTRQDVPTLSATENL.

It localises to the nucleus. In terms of biological role, transcription factor involved in epidermis differentiation. Required for terminal epidermal differentiation: acts downstream of p63/TP63 and activates expression of late epidermal differentiation genes. Specifically binds to the promoter of KLF4 and promotes its expression. The chain is Zinc finger protein 750 (Znf750) from Mus musculus (Mouse).